Here is a 394-residue protein sequence, read N- to C-terminus: RILP-like protein 1 (394 aa).

Residues 2 to 89 (EGISALEKNV…RLERMDRIEK (88 aa)) form the RH1 domain. Residues 68 to 327 (EMEELRLELD…EAEEENKLPQ (260 aa)) adopt a coiled-coil conformation. The 66-residue stretch at 282 to 347 (RPRFTLQELR…IPQESGIKRL (66 aa)) folds into the RH2 domain.

The protein belongs to the RILPL family.

The protein resides in the cytoplasm. Its subcellular location is the cytosol. It is found in the cytoskeleton. It localises to the microtubule organizing center. The protein localises to the centrosome. The protein resides in the cell projection. Its subcellular location is the cilium. In terms of biological role, plays a role in the regulation of cell shape and polarity. Plays a role in cellular protein transport, including protein transport away from primary cilia. Neuroprotective protein. The polypeptide is RILP-like protein 1 (rilpl1) (Xenopus laevis (African clawed frog)).